A 923-amino-acid chain; its full sequence is Protein dct-6 (923 aa).

Residues 312-347 (DMNDQIEQMISLLVDELSELEKLEQLCKEVERTGNQ) adopt a coiled-coil conformation.

Its function is as follows. May have a role in tumor suppression. The sequence is that of Protein dct-6 (dct-6) from Caenorhabditis elegans.